A 387-amino-acid polypeptide reads, in one-letter code: Patatin-02 (387 aa).

A signal peptide spans 1–23 (MATTKSFLILIVMILATTSSTFA). In terms of domain architecture, PNPLA spans 32–230 (LSIDGGGIKG…TVADPALLSV (199 aa)). Residues 36 to 41 (GGGIKG) carry the GXGXXG motif. A GXSXG motif is present at residues 75-79 (GTSTG). S77 serves as the catalytic Nucleophile. N-linked (GlcNAc...) asparagine glycosylation is present at N115. The active-site Proton acceptor is the D216. The DGA/G motif lies at 216–218 (DGA). Residues 361-385 (ETYEEALKRFAKLLSDRKKLRANKA) adopt a coiled-coil conformation.

It belongs to the patatin family. Tuber and stolon.

It is found in the vacuole. In terms of biological role, probable lipolytic acyl hydrolase (LAH), an activity which is thought to be involved in the response of tubers to pathogens. The protein is Patatin-02 of Solanum tuberosum (Potato).